Here is a 524-residue protein sequence, read N- to C-terminus: Peptide chain release factor 3 (524 aa).

The 267-residue stretch at 9–275 (SRRRTFAIIS…AVVDLSPPPI (267 aa)) folds into the tr-type G domain. Residues 18–25 (SHPDAGKT), 86–90 (DTPGH), and 140–143 (NKLD) contribute to the GTP site.

This sequence belongs to the TRAFAC class translation factor GTPase superfamily. Classic translation factor GTPase family. PrfC subfamily.

The protein resides in the cytoplasm. Its function is as follows. Increases the formation of ribosomal termination complexes and stimulates activities of RF-1 and RF-2. It binds guanine nucleotides and has strong preference for UGA stop codons. It may interact directly with the ribosome. The stimulation of RF-1 and RF-2 is significantly reduced by GTP and GDP, but not by GMP. This is Peptide chain release factor 3 from Dechloromonas aromatica (strain RCB).